The primary structure comprises 398 residues: Tyrosine--tRNA ligase (398 aa).

The 'HIGH' region signature appears at 42-51 (PTAPDLHLGH). Positions 226-230 (KMSKS) match the 'KMSKS' region motif. An ATP-binding site is contributed by K229. Positions 341–397 (AFLEAAGLVKSRGEAKRLIKEGALSVDGVRCDDANSPLASGEYVIKLGKKRFLRLTV) constitute an S4 RNA-binding domain.

It belongs to the class-I aminoacyl-tRNA synthetase family. TyrS type 2 subfamily. As to quaternary structure, homodimer.

It localises to the cytoplasm. The catalysed reaction is tRNA(Tyr) + L-tyrosine + ATP = L-tyrosyl-tRNA(Tyr) + AMP + diphosphate + H(+). Functionally, catalyzes the attachment of tyrosine to tRNA(Tyr) in a two-step reaction: tyrosine is first activated by ATP to form Tyr-AMP and then transferred to the acceptor end of tRNA(Tyr). The polypeptide is Tyrosine--tRNA ligase (Nitratidesulfovibrio vulgaris (strain ATCC 29579 / DSM 644 / CCUG 34227 / NCIMB 8303 / VKM B-1760 / Hildenborough) (Desulfovibrio vulgaris)).